A 336-amino-acid polypeptide reads, in one-letter code: Ribosomal RNA small subunit methyltransferase C (336 aa).

The protein belongs to the methyltransferase superfamily. RsmC family. As to quaternary structure, monomer.

The protein resides in the cytoplasm. The catalysed reaction is guanosine(1207) in 16S rRNA + S-adenosyl-L-methionine = N(2)-methylguanosine(1207) in 16S rRNA + S-adenosyl-L-homocysteine + H(+). Its function is as follows. Specifically methylates the guanine in position 1207 of 16S rRNA in the 30S particle. This chain is Ribosomal RNA small subunit methyltransferase C, found in Buchnera aphidicola subsp. Schizaphis graminum (strain Sg).